We begin with the raw amino-acid sequence, 397 residues long: Serpin B10 (397 aa).

Residues Arg62–Ser85 form a disordered region. Basic and acidic residues predominate over residues Pro70–Glu79. Positions Lys74–Lys77 match the Nuclear localization signal motif.

Belongs to the serpin family. Ov-serpin subfamily.

Its subcellular location is the nucleus. The protein localises to the cytoplasm. Functionally, protease inhibitor that may play a role in the regulation of protease activities during hematopoiesis and apoptosis induced by TNF. May regulate protease activities in the cytoplasm and in the nucleus. This chain is Serpin B10 (SERPINB10), found in Papio anubis (Olive baboon).